The primary structure comprises 481 residues: Glutamyl-tRNA(Gln) amidotransferase subunit A (481 aa).

Residues K76 and S151 each act as charge relay system in the active site. S175 acts as the Acyl-ester intermediate in catalysis.

Belongs to the amidase family. GatA subfamily. Heterotrimer of A, B and C subunits.

It carries out the reaction L-glutamyl-tRNA(Gln) + L-glutamine + ATP + H2O = L-glutaminyl-tRNA(Gln) + L-glutamate + ADP + phosphate + H(+). Its function is as follows. Allows the formation of correctly charged Gln-tRNA(Gln) through the transamidation of misacylated Glu-tRNA(Gln) in organisms which lack glutaminyl-tRNA synthetase. The reaction takes place in the presence of glutamine and ATP through an activated gamma-phospho-Glu-tRNA(Gln). This Chlorobaculum parvum (strain DSM 263 / NCIMB 8327) (Chlorobium vibrioforme subsp. thiosulfatophilum) protein is Glutamyl-tRNA(Gln) amidotransferase subunit A.